Here is an 89-residue protein sequence, read N- to C-terminus: Small ribosomal subunit protein uS15 (89 aa).

The protein belongs to the universal ribosomal protein uS15 family. In terms of assembly, part of the 30S ribosomal subunit. Forms a bridge to the 50S subunit in the 70S ribosome, contacting the 23S rRNA.

One of the primary rRNA binding proteins, it binds directly to 16S rRNA where it helps nucleate assembly of the platform of the 30S subunit by binding and bridging several RNA helices of the 16S rRNA. Functionally, forms an intersubunit bridge (bridge B4) with the 23S rRNA of the 50S subunit in the ribosome. The chain is Small ribosomal subunit protein uS15 from Buchnera aphidicola subsp. Baizongia pistaciae (strain Bp).